A 700-amino-acid chain; its full sequence is Calpain-2 catalytic subunit (700 aa).

Ala2 bears the N-acetylalanine mark. A propeptide spans 2 to 19 (anchors to the small subunit); the sequence is AGIAAKLVKDREAAEGLG. Residues 45–344 form the Calpain catalytic domain; sequence LFQDPSFPAI…YSRLEICNLT (300 aa). Residues Ile89, Gly91, and Asp96 each contribute to the Ca(2+) site. Residue Cys105 is part of the active site. Glu175, Gln229, and Lys230 together coordinate Ca(2+). Active-site residues include His262 and Asn286. Residues Glu292, Asp299, and Glu323 each coordinate Ca(2+). Positions 345 to 514 are domain III; the sequence is PDTLTSDTYK…KKADYQAVDD (170 aa). The linker stretch occupies residues 515–529; the sequence is EIEANLEEFDISEDD. A domain IV region spans residues 530-700; the sequence is IDDGFRRLFA…LISWLCFSVL (171 aa). Residues Ala542, Asp545, Glu547, Glu552, Asp585, Asp587, Ser589, Lys591, Glu596, Asp615, Asp617, Ser619, Thr621, Glu626, Asp658, and Asn661 each coordinate Ca(2+). EF-hand domains are found at residues 572 to 605 and 602 to 637; these read FSIE…TKIQ and TKIQ…AGFK. One can recognise an EF-hand 3 domain in the interval 667-700; that stretch reads VRLETLFKIFKQLDPENTGTIELDLISWLCFSVL.

Belongs to the peptidase C2 family. Forms a heterodimer with a small (regulatory) subunit (CAPNS1). Interacts with CPEB3; this leads to cleavage of CPEB3. Ca(2+) serves as cofactor.

It is found in the cytoplasm. It localises to the cell membrane. It catalyses the reaction Broad endopeptidase specificity.. With respect to regulation, activated by 200-1000 micromolar concentrations of calcium and inhibited by calpastatin. Calcium-regulated non-lysosomal thiol-protease which catalyzes limited proteolysis of substrates involved in cytoskeletal remodeling and signal transduction. Proteolytically cleaves MYOC at 'Arg-226'. Proteolytically cleaves CPEB3 following neuronal stimulation which abolishes CPEB3 translational repressor activity, leading to translation of CPEB3 target mRNAs. The chain is Calpain-2 catalytic subunit (CAPN2) from Macaca fascicularis (Crab-eating macaque).